Here is a 985-residue protein sequence, read N- to C-terminus: Regulator of telomere elongation helicase 1 homolog (985 aa).

The 297-residue stretch at 7 to 303 folds into the Helicase ATP-binding domain; it reads AGIPVHFPFE…QDMAGDEPKD (297 aa). 42 to 49 is a binding site for ATP; that stretch reads SPTGTGKT. Cys146, Cys164, Cys173, and Cys209 together coordinate [4Fe-4S] cluster. A DEAH box motif is present at residues 252–255; the sequence is DEAH. The tract at residues 863–883 is disordered; sequence VKIHKRERSSPTAPESSSQVT. The span at 872-882 shows a compositional bias: polar residues; the sequence is SPTAPESSSQV. Position 874 is a phosphothreonine (Thr874).

The protein belongs to the helicase family. RAD3/XPD subfamily. As to expression, expressed in both male germline and somatic cells (at protein level). Expressed in ovarian germline stem cells (at protein level). Expressed in adult testes (at protein level). Expressed in the germarium including germline stem cells.

Its subcellular location is the nucleus. The protein localises to the chromosome. It catalyses the reaction ATP + H2O = ADP + phosphate + H(+). A probable ATP-dependent DNA helicase implicated in DNA repair and the maintenance of genomic stability. Acts as an anti-recombinase to counteract toxic recombination and limit crossover during meiosis. Regulates meiotic recombination and crossover homeostasis by physically dissociating strand invasion events and thereby promotes noncrossover repair by meiotic synthesis dependent strand annealing (SDSA) as well as disassembly of D loop recombination intermediates. In male germline stem cells (GSCs), plays a role in GSCs maintenance during larval germline development by modulating the expression of genes such as Stat92E and preventing DNA damage-induced checkpoint activation. May play a role in female germline stem cell maintenance. This is Regulator of telomere elongation helicase 1 homolog from Drosophila melanogaster (Fruit fly).